The chain runs to 183 residues: Inner membrane-spanning protein YciB (183 aa).

The next 5 helical transmembrane spans lie at 19–39, 53–73, 76–96, 121–141, and 151–171; these read LYGV…QLIV, IMGI…DLNF, WKVT…QFVF, LGWA…SYYF, and TFGF…YLYP.

This sequence belongs to the YciB family.

The protein resides in the cell inner membrane. In terms of biological role, plays a role in cell envelope biogenesis, maintenance of cell envelope integrity and membrane homeostasis. In Actinobacillus pleuropneumoniae serotype 3 (strain JL03), this protein is Inner membrane-spanning protein YciB.